Consider the following 446-residue polypeptide: Eukaryotic translation initiation factor 3 subunit E (446 aa).

The PCI domain occupies 256–425 (TDLFFSPAYI…GTVIMNHPPQ (170 aa)).

Belongs to the eIF-3 subunit E family. As to quaternary structure, component of the eukaryotic translation initiation factor 3 (eIF-3) complex.

It is found in the cytoplasm. Component of the eukaryotic translation initiation factor 3 (eIF-3) complex, which is involved in protein synthesis of a specialized repertoire of mRNAs and, together with other initiation factors, stimulates binding of mRNA and methionyl-tRNAi to the 40S ribosome. The eIF-3 complex specifically targets and initiates translation of a subset of mRNAs involved in cell proliferation. The polypeptide is Eukaryotic translation initiation factor 3 subunit E (int6) (Aspergillus terreus (strain NIH 2624 / FGSC A1156)).